Here is a 234-residue protein sequence, read N- to C-terminus: Large ribosomal subunit protein uL1 (234 aa).

This sequence belongs to the universal ribosomal protein uL1 family. In terms of assembly, part of the 50S ribosomal subunit.

In terms of biological role, binds directly to 23S rRNA. The L1 stalk is quite mobile in the ribosome, and is involved in E site tRNA release. Functionally, protein L1 is also a translational repressor protein, it controls the translation of the L11 operon by binding to its mRNA. This is Large ribosomal subunit protein uL1 from Prochlorococcus marinus (strain MIT 9211).